The sequence spans 295 residues: 4-hydroxy-tetrahydrodipicolinate synthase (295 aa).

T47 is a binding site for pyruvate. Residue Y135 is the Proton donor/acceptor of the active site. K163 (schiff-base intermediate with substrate) is an active-site residue. I206 contacts pyruvate.

The protein belongs to the DapA family. As to quaternary structure, homodimer.

Its subcellular location is the cytoplasm. The catalysed reaction is L-aspartate 4-semialdehyde + pyruvate = (2S,4S)-4-hydroxy-2,3,4,5-tetrahydrodipicolinate + H2O + H(+). The protein operates within amino-acid biosynthesis; L-lysine biosynthesis via DAP pathway; (S)-tetrahydrodipicolinate from L-aspartate: step 3/4. In terms of biological role, catalyzes the condensation of (S)-aspartate-beta-semialdehyde [(S)-ASA] and pyruvate to 4-hydroxy-tetrahydrodipicolinate (HTPA). This is 4-hydroxy-tetrahydrodipicolinate synthase from Staphylococcus aureus (strain MSSA476).